Here is a 206-residue protein sequence, read N- to C-terminus: Guanylate kinase (206 aa).

Positions 6 to 184 constitute a Guanylate kinase-like domain; it reads GILFILSGPS…AVDKVKTIIK (179 aa). Residue 13–20 coordinates ATP; that stretch reads GPSGVGKG.

This sequence belongs to the guanylate kinase family.

The protein resides in the cytoplasm. The catalysed reaction is GMP + ATP = GDP + ADP. In terms of biological role, essential for recycling GMP and indirectly, cGMP. The polypeptide is Guanylate kinase (Oceanobacillus iheyensis (strain DSM 14371 / CIP 107618 / JCM 11309 / KCTC 3954 / HTE831)).